Here is a 251-residue protein sequence, read N- to C-terminus: Gamma-glutamyl peptidase 4 (251 aa).

The Glutamine amidotransferase type-1 domain maps to 16 to 213 (SEFAKKTYGG…IDRVLAGGHI (198 aa)). Residue Cys100 is the Nucleophile of the active site. Active-site residues include His192 and Glu194.

Belongs to the peptidase C26 family.

The protein resides in the cytoplasm. It localises to the cytosol. Its pathway is secondary metabolite biosynthesis. Functionally, involved in glucosinolate biosynthesis. Hydrolyzes the gamma-glutamyl peptide bond of several glutathione (GSH) conjugates to produce Cys-Gly conjugates related to glucosinolates. The gamma-Glu-Cys-Gly-GSH conjugates are the sulfur-donating molecule in glucosinolate biosynthesis. This chain is Gamma-glutamyl peptidase 4, found in Arabidopsis thaliana (Mouse-ear cress).